A 391-amino-acid chain; its full sequence is Multidrug resistance protein MdtL (391 aa).

The next 12 helical transmembrane spans lie at 4 to 24 (FLIC…MYLV), 42 to 62 (IAFS…GKVA), 69 to 89 (PVAI…SLAE), 93 to 113 (LFLA…VVAF), 131 to 151 (LLNG…HLIM), 158 to 178 (SLFW…LFIL), 203 to 222 (FFLS…LTFV), 245 to 265 (ALTA…LGIF), 269 to 289 (TLMI…AVSP), 293 to 313 (VSLF…GVAM), 331 to 351 (LGIA…VVGI), and 356 to 376 (MLIG…MFVA).

The protein belongs to the major facilitator superfamily. DHA1 family. MdtL (TC 2.A.1.2.22) subfamily.

Its subcellular location is the cell inner membrane. Confers resistance to chloramphenicol. In Escherichia coli O139:H28 (strain E24377A / ETEC), this protein is Multidrug resistance protein MdtL.